The primary structure comprises 311 residues: Small ribosomal subunit protein uS3 (311 aa).

One can recognise a KH type-2 domain in the interval 17-86; sequence MDEYFAEQLN…NPQIDAQEVK (70 aa). The interval 190–267 is disordered; sequence PDSYTTTEPS…EPQAEVAEDL (78 aa). Over residues 194 to 204 the composition is skewed to low complexity; that stretch reads TTTEPSEPVTE. The span at 205–231 shows a compositional bias: basic and acidic residues; that stretch reads PVEKPAEKPAAKPAEKPVEAPKKESAA. Residues 232 to 247 show a composition bias toward low complexity; sequence KPKTPAVAPEKPVETA. A compositionally biased stretch (acidic residues) spans 248 to 267; that stretch reads EVAEPEEAEEEPQAEVAEDL.

It belongs to the universal ribosomal protein uS3 family. In terms of assembly, part of the 30S ribosomal subunit.

Binds the lower part of the 30S subunit head. The protein is Small ribosomal subunit protein uS3 of Methanosarcina barkeri (strain Fusaro / DSM 804).